A 416-amino-acid chain; its full sequence is Gamma-glutamyl phosphate reductase (416 aa).

This sequence belongs to the gamma-glutamyl phosphate reductase family.

The protein localises to the cytoplasm. The enzyme catalyses L-glutamate 5-semialdehyde + phosphate + NADP(+) = L-glutamyl 5-phosphate + NADPH + H(+). It functions in the pathway amino-acid biosynthesis; L-proline biosynthesis; L-glutamate 5-semialdehyde from L-glutamate: step 2/2. In terms of biological role, catalyzes the NADPH-dependent reduction of L-glutamate 5-phosphate into L-glutamate 5-semialdehyde and phosphate. The product spontaneously undergoes cyclization to form 1-pyrroline-5-carboxylate. The sequence is that of Gamma-glutamyl phosphate reductase from Streptococcus equi subsp. zooepidemicus (strain MGCS10565).